A 708-amino-acid chain; its full sequence is Leukotoxin translocation ATP-binding protein LktB (708 aa).

One can recognise a Peptidase C39 domain in the interval 1–126 (MEANHQRNDL…ACYQGQLILV (126 aa)). Residues 155-437 (FLETLIVSIF…LAQLWQDFQQ (283 aa)) form the ABC transmembrane type-1 domain. Transmembrane regions (helical) follow at residues 159–179 (LIVS…FQVV), 192–212 (LNII…LSGL), 270–290 (ALTS…MWYY), 296–316 (LVIL…SPIL), and 389–409 (VMVI…LSIG). Residues 469-704 (ISFKNIRFRY…SNGLYSYLHQ (236 aa)) form the ABC transporter domain. An ATP-binding site is contributed by 503–510 (GRSGSGKS).

Belongs to the ABC transporter superfamily. Protein-1 exporter (TC 3.A.1.109) family. In terms of assembly, homodimer.

Its subcellular location is the cell inner membrane. It carries out the reaction ATP + H2O + proteinSide 1 = ADP + phosphate + proteinSide 2.. In terms of biological role, part of the ABC transporter complex LktBD involved in leukotoxin export. Transmembrane domains (TMD) form a pore in the inner membrane and the ATP-binding domain (NBD) is responsible for energy generation. The chain is Leukotoxin translocation ATP-binding protein LktB (lktB) from Mannheimia haemolytica (Pasteurella haemolytica).